The primary structure comprises 113 residues: UPF0060 membrane protein CV_3485 (113 aa).

Transmembrane regions (helical) follow at residues 12 to 32 (GLFVLTALAEIVGCYLPWLVL), 37 to 57 (SLWLLAPTTLALALFAWLLTL), 67 to 87 (AAYGGVYVTVAIAWLWLVDGV), and 91 to 111 (RWDALGCALALAGMAVIMLAP).

It belongs to the UPF0060 family.

The protein resides in the cell inner membrane. The protein is UPF0060 membrane protein CV_3485 of Chromobacterium violaceum (strain ATCC 12472 / DSM 30191 / JCM 1249 / CCUG 213 / NBRC 12614 / NCIMB 9131 / NCTC 9757 / MK).